The chain runs to 308 residues: Putative glutamine amidotransferase Rv2859c (308 aa).

The segment at 1–62 (MDLSASRSDG…ASPRLRSPLG (62 aa)) is disordered. Low complexity-rich tracts occupy residues 13–24 (PLRPASPRLRSP), 31–42 (PLRPASPRLRSP), and 49–61 (PLRP…RSPL). One can recognise a Glutamine amidotransferase type-1 domain in the interval 78–301 (RTGVWDIPAG…VDAASGYAGR (224 aa)). Catalysis depends on Cys177, which acts as the Nucleophile. Catalysis depends on residues His277 and Glu279. Lys289 is covalently cross-linked (Isoglutamyl lysine isopeptide (Lys-Gln) (interchain with Q-Cter in protein Pup)).

The chain is Putative glutamine amidotransferase Rv2859c from Mycobacterium tuberculosis (strain ATCC 25618 / H37Rv).